Here is a 569-residue protein sequence, read N- to C-terminus: Santalene synthase (569 aa).

(2E)-geranyl diphosphate-binding residues include Arg-284, Asp-321, Asp-325, and Arg-460. Residues Asp-321 and Asp-325 each coordinate Mg(2+). The DDXXD motif motif lies at Asp-321 to Asp-325. Residues Asn-463, Thr-467, and Glu-471 each coordinate Mg(2+).

Belongs to the terpene synthase family. Tpsb subfamily. Mg(2+) is required as a cofactor. Mn(2+) serves as cofactor.

The enzyme catalyses (2E,6E)-farnesyl diphosphate = (1S,5S,6R)-alpha-bergamotene + diphosphate. The catalysed reaction is (2E,6E)-farnesyl diphosphate = (+)-alpha-santalene + diphosphate. It carries out the reaction (2E,6E)-farnesyl diphosphate = (-)-beta-santalene + diphosphate. Its function is as follows. Catalyzes a mixture of sesquiterpenoids from (2E,6E)-farnesyl diphosphate in fragrance biosynthesis. Catalyzes the formation of alpha-santalene, beta-santalene, epi-beta-santalene and exo-alpha-bergamotene, as well as traces of alpha-farnesene and beta-farnesene. Also acts with (Z,Z)-farnesyl diphosphate isomer, producing alpha-endo-bergamotene, alpha-santalene, (Z)-beta-farnesene, epi-beta-santalene, and beta-santalene. This Santalum album (White sandalwood) protein is Santalene synthase.